The primary structure comprises 265 residues: MIKWPWKVQESAHQTALPWQEALSIPLLTCLTEQEQSKLVTLAERFLQQKRLVPLQGFELNSLRSCRIALLFCLPVLELGLEWLDSFHEVLIYPAPFVVDDEWEDDIGLVHNQRIVQSGQSWQQGPIVLNWLDIQDSFDASGFNLIIHEVAHKLDTRNGDRASGVPFIPLREVAGWEHDLHAAMNNIQEEIELVGENAASIDAYAASDPAECFAVLSEYFFSAPELFAPRFPSLWQRFCQFYQQDPLQRLHHANDTDSFSATNVH.

Zn(2+) contacts are provided by histidine 111, histidine 148, histidine 152, and glutamate 211.

Belongs to the MtfA family. In terms of assembly, interacts with Mlc. The cofactor is Zn(2+).

The protein localises to the cytoplasm. Functionally, involved in the modulation of the activity of the glucose-phosphotransferase system (glucose-PTS). Interacts with the transcriptional repressor Mlc, preventing its interaction with DNA and leading to the modulation of expression of genes regulated by Mlc, including ptsG, which encodes the PTS system glucose-specific EIICB component. In terms of biological role, shows zinc-dependent metallopeptidase activity. This Escherichia coli (strain UTI89 / UPEC) protein is Mlc titration factor A.